The chain runs to 173 residues: Co-chaperone protein HscB homolog (173 aa).

In terms of domain architecture, J spans 5–77; it reads CHFALFELQP…AQRARYLLTI (73 aa).

It belongs to the HscB family. In terms of assembly, interacts with HscA and stimulates its ATPase activity.

In terms of biological role, co-chaperone involved in the maturation of iron-sulfur cluster-containing proteins. Seems to help targeting proteins to be folded toward HscA. This Pseudomonas fluorescens (strain Pf0-1) protein is Co-chaperone protein HscB homolog.